Reading from the N-terminus, the 512-residue chain is Chitin synthase regulatory factor 2 (512 aa).

6 Sel1-like repeats span residues 224–260 (SEALYLLAVCYGTGALRTEINEKEAYRLYKMAADLNH), 261–296 (VQAAYRVAICLQMGFGVTQNTEEAIHYFFRAASGQH), 297–333 (VGAMHRMALIYFRGLMSVKRDPVKAMYYLNLGALEAD), 337–377 (PQAL…KYGL), 378–414 (KDAQLRVARCFELGQLECDINLVRSFVWYRRLARKRN), and 415–452 (PEAMWKLSQFYLNGVDDVIYPNPELANEWAKAAAYKNH). At cysteine 509 the chain carries Cysteine methyl ester. Cysteine 509 carries S-farnesyl cysteine lipidation. A propeptide spans 510–512 (IIS) (removed in mature form).

The protein localises to the membrane. Involved in chitin biosynthesis. The chain is Chitin synthase regulatory factor 2 (chr2) from Schizosaccharomyces pombe (strain 972 / ATCC 24843) (Fission yeast).